The primary structure comprises 299 residues: 4-diphosphocytidyl-2-C-methyl-D-erythritol kinase (299 aa).

Residue Lys19 is part of the active site. Residue 110–120 (PVASGIGGGSA) participates in ATP binding. Asp152 is a catalytic residue.

This sequence belongs to the GHMP kinase family. IspE subfamily.

The catalysed reaction is 4-CDP-2-C-methyl-D-erythritol + ATP = 4-CDP-2-C-methyl-D-erythritol 2-phosphate + ADP + H(+). It functions in the pathway isoprenoid biosynthesis; isopentenyl diphosphate biosynthesis via DXP pathway; isopentenyl diphosphate from 1-deoxy-D-xylulose 5-phosphate: step 3/6. Catalyzes the phosphorylation of the position 2 hydroxy group of 4-diphosphocytidyl-2C-methyl-D-erythritol. This is 4-diphosphocytidyl-2-C-methyl-D-erythritol kinase from Agrobacterium fabrum (strain C58 / ATCC 33970) (Agrobacterium tumefaciens (strain C58)).